A 90-amino-acid chain; its full sequence is MRSKPPSWGHEGIISRHPTKLLPIGLPGTGDLFAGSIVAGLARGVPLPRAVAIAQNLTSRAQDHANALGAGEVVLSEPESRRALVALDPN.

In terms of biological role, involved in nodulation of a particular host, M.lupulina. This chain is Nodulation protein NolS (nolS), found in Sinorhizobium meliloti (strain Sm2011 / Rm2011 / 2011).